The chain runs to 366 residues: Peroxisomal (S)-2-hydroxy-acid oxidase GLO4 (366 aa).

Residues 1 to 360 (MEDNLPVNVR…TRSHVMTEGD (360 aa)) enclose the FMN hydroxy acid dehydrogenase domain. An a 2-oxocarboxylate-binding site is contributed by tyrosine 27. Residues 80 to 82 (PTG), serine 109, 130 to 132 (QLY), and threonine 158 contribute to the FMN site. Tyrosine 132 serves as a coordination point for a 2-oxocarboxylate. Arginine 167 serves as a coordination point for a 2-oxocarboxylate. 2 residues coordinate FMN: lysine 231 and serine 253. Catalysis depends on histidine 255, which acts as the Proton acceptor. Residue arginine 258 participates in a 2-oxocarboxylate binding. Residues 286–290 (DGGIR) and 309–310 (XX) contribute to the FMN site. The Microbody targeting signal motif lies at 364-366 (SLL).

The protein belongs to the FMN-dependent alpha-hydroxy acid dehydrogenase family. As to quaternary structure, homotetramer. The cofactor is FMN.

The protein resides in the peroxisome. The catalysed reaction is a (2S)-2-hydroxycarboxylate + O2 = a 2-oxocarboxylate + H2O2. Its pathway is lipid metabolism; fatty acid metabolism. Its function is as follows. Oxidase that catalyzes the oxidation of a broad range of 2-hydroxyacids to the corresponding 2-oxoacids, with a reduction of O2 to H2O2. May be involved in a general medium- and long-chain fatty acid catabolic pathway such as alpha-oxidation. The chain is Peroxisomal (S)-2-hydroxy-acid oxidase GLO4 (GLO4) from Oryza sativa subsp. indica (Rice).